Here is a 328-residue protein sequence, read N- to C-terminus: Neuronal membrane glycoprotein M6-b (328 aa).

Residues 1–22 (MKPAMETAAEENTEQSQERKVN) are disordered. Residues 71–91 (GGVPYASLVATILCFSGVALF) form a helical membrane-spanning segment. N-linked (GlcNAc...) asparagine glycosylation occurs at Asn-113. Helical transmembrane passes span 130–150 (VIYGIASFFFLYGIILLAEGF) and 176–196 (FVFLTYVLGVAWLGVFGFSAV). Asn-217 carries N-linked (GlcNAc...) asparagine glycosylation. Residues 265–285 (FIVACAGAGATVIALIHFLMI) traverse the membrane as a helical segment. A phosphoserine mark is found at Ser-318, Ser-320, and Ser-326.

It belongs to the myelin proteolipid protein family. Interacts with SERT. As to expression, widely expressed. In the brain, expressed in neurons and oligodendrocytes.

It is found in the membrane. The protein resides in the cell membrane. In terms of biological role, may be involved in neural development. Involved in regulation of osteoblast function and bone formation. Involved in matrix vesicle release by osteoblasts; this function seems to involve maintenance of the actin cytoskeleton. May be involved in cellular trafficking of SERT and thereby in regulation of serotonin uptake. The protein is Neuronal membrane glycoprotein M6-b (Gpm6b) of Mus musculus (Mouse).